The chain runs to 422 residues: Glutamyl-tRNA reductase (422 aa).

Residues 49–52 (TCNR), Ser-107, 112–114 (EPQ), and Gln-118 contribute to the substrate site. The active-site Nucleophile is the Cys-50. Residue 187-192 (GAGETI) participates in NADP(+) binding.

This sequence belongs to the glutamyl-tRNA reductase family. As to quaternary structure, homodimer.

The enzyme catalyses (S)-4-amino-5-oxopentanoate + tRNA(Glu) + NADP(+) = L-glutamyl-tRNA(Glu) + NADPH + H(+). Its pathway is porphyrin-containing compound metabolism; protoporphyrin-IX biosynthesis; 5-aminolevulinate from L-glutamyl-tRNA(Glu): step 1/2. Catalyzes the NADPH-dependent reduction of glutamyl-tRNA(Glu) to glutamate 1-semialdehyde (GSA). The polypeptide is Glutamyl-tRNA reductase (Stutzerimonas stutzeri (strain A1501) (Pseudomonas stutzeri)).